The primary structure comprises 163 residues: MAKDSSFDIVSKVELPEVTNAINIALKEIQNRYDFKGSKSDIKLEKEVLVLTSDDEFKLEQVKDVLISKLVKRNVPIKNLDYGKVEAATGNTVRQRATLQQGIDKDNAKKINNIIKEMKLKVKTQVQDDQVRVTAKSRDDLQAVIAAVRSADLPIDVQFINYR.

This sequence belongs to the YajQ family.

In terms of biological role, nucleotide-binding protein. The protein is Nucleotide-binding protein BC_1159 of Bacillus cereus (strain ATCC 14579 / DSM 31 / CCUG 7414 / JCM 2152 / NBRC 15305 / NCIMB 9373 / NCTC 2599 / NRRL B-3711).